A 358-amino-acid polypeptide reads, in one-letter code: Phosphoserine aminotransferase (358 aa).

Arg41 provides a ligand contact to L-glutamate. Pyridoxal 5'-phosphate contacts are provided by residues 75-76 (AS), Trp100, Thr148, Asp167, and Gln190. Lys191 carries the N6-(pyridoxal phosphate)lysine modification. 233-234 (NT) serves as a coordination point for pyridoxal 5'-phosphate.

This sequence belongs to the class-V pyridoxal-phosphate-dependent aminotransferase family. SerC subfamily. In terms of assembly, homodimer. Pyridoxal 5'-phosphate serves as cofactor.

It localises to the cytoplasm. It carries out the reaction O-phospho-L-serine + 2-oxoglutarate = 3-phosphooxypyruvate + L-glutamate. It catalyses the reaction 4-(phosphooxy)-L-threonine + 2-oxoglutarate = (R)-3-hydroxy-2-oxo-4-phosphooxybutanoate + L-glutamate. Its pathway is amino-acid biosynthesis; L-serine biosynthesis; L-serine from 3-phospho-D-glycerate: step 2/3. It participates in cofactor biosynthesis; pyridoxine 5'-phosphate biosynthesis; pyridoxine 5'-phosphate from D-erythrose 4-phosphate: step 3/5. In terms of biological role, catalyzes the reversible conversion of 3-phosphohydroxypyruvate to phosphoserine and of 3-hydroxy-2-oxo-4-phosphonooxybutanoate to phosphohydroxythreonine. The chain is Phosphoserine aminotransferase from Campylobacter lari (strain RM2100 / D67 / ATCC BAA-1060).